A 491-amino-acid chain; its full sequence is ATP-dependent protease ATPase subunit HslU (491 aa).

ATP-binding positions include I34, 76 to 81 (GVGKTE), D296, E364, and R436.

This sequence belongs to the ClpX chaperone family. HslU subfamily. A double ring-shaped homohexamer of HslV is capped on each side by a ring-shaped HslU homohexamer. The assembly of the HslU/HslV complex is dependent on binding of ATP.

Its subcellular location is the cytoplasm. In terms of biological role, ATPase subunit of a proteasome-like degradation complex; this subunit has chaperone activity. The binding of ATP and its subsequent hydrolysis by HslU are essential for unfolding of protein substrates subsequently hydrolyzed by HslV. HslU recognizes the N-terminal part of its protein substrates and unfolds these before they are guided to HslV for hydrolysis. The chain is ATP-dependent protease ATPase subunit HslU from Chlorobaculum tepidum (strain ATCC 49652 / DSM 12025 / NBRC 103806 / TLS) (Chlorobium tepidum).